The following is a 312-amino-acid chain: Carbonic anhydrase 4 (312 aa).

The N-terminal stretch at 1-18 (MRMLLALLALSAARPSAS) is a signal peptide. Residues 21 to 285 (SHWCYEVQAE…LGQRTVIKSG (265 aa)) form the Alpha-carbonic anhydrase domain. Intrachain disulfides connect cysteine 24–cysteine 36 and cysteine 46–cysteine 229. Histidine 88 (proton donor/acceptor) is an active-site residue. Zn(2+) contacts are provided by histidine 115, histidine 117, and histidine 140. 225–226 (TT) lines the substrate pocket. Serine 284 carries the GPI-anchor amidated serine lipid modification. A propeptide spans 285-312 (GAPGRPLPWALPALLGPMLACLLAGFLR) (removed in mature form).

The protein belongs to the alpha-carbonic anhydrase family. In terms of assembly, interacts with SLC4A4. Zn(2+) is required as a cofactor. Expressed in the endothelium of the choriocapillaris in eyes (at protein level). Not expressed in the retinal epithelium at detectable levels.

It localises to the cell membrane. The catalysed reaction is hydrogencarbonate + H(+) = CO2 + H2O. Its activity is regulated as follows. Activated by histamine, L-adrenaline, D-phenylalanine, L- and D-histidine. Inhibited by coumarins, saccharin, sulfonamide derivatives such as acetazolamide and Foscarnet (phosphonoformate trisodium salt). In terms of biological role, catalyzes the reversible hydration of carbon dioxide into bicarbonate and protons and thus is essential to maintaining intracellular and extracellular pH. May stimulate the sodium/bicarbonate transporter activity of SLC4A4 that acts in pH homeostasis. It is essential for acid overload removal from the retina and retina epithelium, and acid release in the choriocapillaris in the choroid. This chain is Carbonic anhydrase 4, found in Homo sapiens (Human).